A 443-amino-acid chain; its full sequence is Histidinol dehydrogenase (443 aa).

3 residues coordinate NAD(+): Y141, Q203, and N226. The substrate site is built by S249, Q271, and H274. 2 residues coordinate Zn(2+): Q271 and H274. Residues E339 and H340 each act as proton acceptor in the active site. 4 residues coordinate substrate: H340, D373, E427, and H432. A Zn(2+)-binding site is contributed by D373. H432 serves as a coordination point for Zn(2+).

It belongs to the histidinol dehydrogenase family. It depends on Zn(2+) as a cofactor.

The enzyme catalyses L-histidinol + 2 NAD(+) + H2O = L-histidine + 2 NADH + 3 H(+). It functions in the pathway amino-acid biosynthesis; L-histidine biosynthesis; L-histidine from 5-phospho-alpha-D-ribose 1-diphosphate: step 9/9. Catalyzes the sequential NAD-dependent oxidations of L-histidinol to L-histidinaldehyde and then to L-histidine. This is Histidinol dehydrogenase from Chlorobium luteolum (strain DSM 273 / BCRC 81028 / 2530) (Pelodictyon luteolum).